The following is a 1220-amino-acid chain: MIPEKPNDVIWTDDQWKSIYAKGQDTLVAAAAGSGKTAVLVERIIQRILRDEIDVDRLLVVTFTNLSAREMKHRVEKRIQKASLEDPSNTHLKNQRVKIHQAQISTLHSFCLKLIQQHYDVLDIDPNFRTSSEAENILLLEQTIDEVLEKYYAELNPAFIDLSEQLSSDRSDERLRQIIKSVYYFAVANPQPEQWLKSLVSPYKDNQAQDEFLELLMNLAKVFMNTALENLNKSFDLYSELAGCDKQLEVIEDERAFIARAMEGGILNTELISKHSFISRFPSATKKIKEANDGNLELLESAKAYYDDYKGAVEKVQQDYFSRSAEDLKADMAKLAPRVEVLSQITRDVIDTFSKKKRSRNILDFSDYEHFALKILMNEDGTPTDLAKHYRNGFDEILVDEYQDTNRVQEQILSCIKRGDETDGNLFMVGDVKQSIYKFRQADPSLFIEKYSRFSHDGTTGMRIDLSQNFRSRPEVLSTTNYLFKHMMDESVGEIIYDEAAQLYYGAPFDDKPHPLNLNVMVEDKESELTGTEQEAEYIANQVEEIMNHREVYDMGTGSYRKPSYKDIVILERGYNRSRELQQAFKNRDIPFHVNSKEGYFEQTEVRLVLSFLRTVDNPLQDIYLVGLMRSVIYQFTEDELARIRVTSPNDDYFYQSIQHYLKTKEADPDLVAKLQDFLKDLKFYQEFSLEHPVYQLIDRFYNNRLVIQYFSGMIGGKGRRANLYGLYNKAIEFENSSFRGLFQFIRFIDELIDRGKDFGEENVVGPNDDVVRMMTIHASKGLEFPFVIYSGLSKSFNRSDLYKPVILNQKYGMGMTYFDVEKDFAFPSLASVTLRAITEKEMISEEMRLMYVALTRAKEQLFLVGRVKAEKELDKMLNTAISNNMLPMSYRLEVKNPLQLIYAILAKYQANHLTNDLKFERNIDELDDAIHPYAEIHIDEYSDIAQDIHQNEDEEFRTVNDIVNYQSTNTERQQAIETQLDYQYPYQKDVVKPTKQSVSELKRQLETEETGTSYERVRQYQLGASTYERPKFMRQHKKRKANEIGTLMHTVMQHLPFKEERMTSAELDEYIDGLIEKNIIEDDAKPDIRMDEVMNFIKSDLYLEIAQSDQIMREMPFVVNQSKVDHQMNDDEDVSIIQGMIDLIYRKDNQYYFVDYKTDTFNQRRGVSDEELGEQLKARYKIQMYYYRSALETILQKEVKGYLYFFKFGTLSLEETEKH.

The UvrD-like helicase ATP-binding domain occupies 9 to 473 (VIWTDDQWKS…IDLSQNFRSR (465 aa)). 30–37 (AAAGSGKT) lines the ATP pocket. One can recognise a UvrD-like helicase C-terminal domain in the interval 474–782 (PEVLSTTNYL…RMMTIHASKG (309 aa)).

This sequence belongs to the helicase family. AddA subfamily. Heterodimer of AddA and AddB/RexB. The cofactor is Mg(2+).

It catalyses the reaction Couples ATP hydrolysis with the unwinding of duplex DNA by translocating in the 3'-5' direction.. It carries out the reaction ATP + H2O = ADP + phosphate + H(+). Functionally, the heterodimer acts as both an ATP-dependent DNA helicase and an ATP-dependent, dual-direction single-stranded exonuclease. Recognizes the chi site generating a DNA molecule suitable for the initiation of homologous recombination. The AddA nuclease domain is required for chi fragment generation; this subunit has the helicase and 3' -&gt; 5' nuclease activities. In Staphylococcus carnosus (strain TM300), this protein is ATP-dependent helicase/nuclease subunit A.